Here is a 185-residue protein sequence, read N- to C-terminus: Elongation factor P (185 aa).

It belongs to the elongation factor P family.

Its subcellular location is the cytoplasm. The protein operates within protein biosynthesis; polypeptide chain elongation. Its function is as follows. Involved in peptide bond synthesis. Stimulates efficient translation and peptide-bond synthesis on native or reconstituted 70S ribosomes in vitro. Probably functions indirectly by altering the affinity of the ribosome for aminoacyl-tRNA, thus increasing their reactivity as acceptors for peptidyl transferase. The polypeptide is Elongation factor P (Bordetella avium (strain 197N)).